A 447-amino-acid polypeptide reads, in one-letter code: Rab GDP dissociation inhibitor alpha (447 aa).

S427 carries the phosphoserine modification.

Belongs to the Rab GDI family. As to quaternary structure, interacts with RHOH. Interacts with the non-phosphorylated forms of RAB1A, RAB3A, RAB5A, RAB5B, RAB5C, RAB8A, RAB8B, RAB12, RAB35, and RAB43. Interacts with RAB10. As to expression, high expression in brain, lower in other tissues.

Its subcellular location is the cytoplasm. It localises to the golgi apparatus. It is found in the trans-Golgi network. In terms of biological role, regulates the GDP/GTP exchange reaction of most Rab proteins by inhibiting the dissociation of GDP from them, and the subsequent binding of GTP to them. Promotes the dissociation of GDP-bound Rab proteins from the membrane and inhibits their activation. Promotes the dissociation of RAB1A, RAB3A, RAB5A and RAB10 from membranes. In Mus musculus (Mouse), this protein is Rab GDP dissociation inhibitor alpha (Gdi1).